Here is a 432-residue protein sequence, read N- to C-terminus: Short/branched chain specific acyl-CoA dehydrogenase, mitochondrial (432 aa).

A mitochondrion-targeting transit peptide spans 1–33 (MEGLAVRLLRGSRLLRRNFLTCLSSWKIPPHVS). Residue Lys70 is modified to N6-acetyllysine; alternate. Lys70 carries the post-translational modification N6-succinyllysine; alternate. Residues 174–183 (FCLSEAGAGS) and 207–209 (WIS) each bind FAD. Ser183 contacts substrate. Residue Ser183 is modified to Phosphoserine. 2 residues coordinate substrate: Tyr229 and Tyr283. Position 284 is an N6-acetyllysine; alternate (Lys284). At Lys284 the chain carries N6-succinyllysine; alternate. A substrate-binding site is contributed by 291-294 (NEGR). FAD is bound by residues Arg319, Gln330, and 387 to 391 (EWMGG). The Proton acceptor role is filled by Glu414. Residue 416-418 (ASN) coordinates FAD. The residue at position 426 (Lys426) is an N6-acetyllysine.

Belongs to the acyl-CoA dehydrogenase family. In terms of assembly, homotetramer. The cofactor is FAD. Ubiquitously expressed.

It localises to the mitochondrion matrix. It catalyses the reaction 2-methylbutanoyl-CoA + oxidized [electron-transfer flavoprotein] + H(+) = (2E)-2-methylbut-2-enoyl-CoA + reduced [electron-transfer flavoprotein]. It carries out the reaction (2S)-2-methylbutanoyl-CoA + oxidized [electron-transfer flavoprotein] + H(+) = (2E)-2-methylbut-2-enoyl-CoA + reduced [electron-transfer flavoprotein]. The catalysed reaction is (2R)-2-methylbutanoyl-CoA + oxidized [electron-transfer flavoprotein] + H(+) = ethylacryloyl-CoA + reduced [electron-transfer flavoprotein]. The enzyme catalyses butanoyl-CoA + oxidized [electron-transfer flavoprotein] + H(+) = (2E)-butenoyl-CoA + reduced [electron-transfer flavoprotein]. It catalyses the reaction 2-methylpropanoyl-CoA + oxidized [electron-transfer flavoprotein] + H(+) = 2-methylpropenoyl-CoA + reduced [electron-transfer flavoprotein]. It carries out the reaction hexanoyl-CoA + oxidized [electron-transfer flavoprotein] + H(+) = (2E)-hexenoyl-CoA + reduced [electron-transfer flavoprotein]. The catalysed reaction is 2-methylhexanoyl-CoA + oxidized [electron-transfer flavoprotein] + H(+) = 2-methylhexenoyl-CoA + reduced [electron-transfer flavoprotein]. The enzyme catalyses valproyl-CoA + oxidized [electron-transfer flavoprotein] + H(+) = (2E)-2-propylpent-2-enoyl-CoA + reduced [electron-transfer flavoprotein]. It participates in lipid metabolism; mitochondrial fatty acid beta-oxidation. It functions in the pathway amino-acid degradation; L-isoleucine degradation. With respect to regulation, competitively inhibited by valproyl-CoA. In terms of biological role, short and branched chain specific acyl-CoA dehydrogenase that catalyzes the removal of one hydrogen from C-2 and C-3 of the fatty acyl-CoA thioester, resulting in the formation of trans-2-enoyl-CoA. Among the different mitochondrial acyl-CoA dehydrogenases, acts specifically on short and branched chain acyl-CoA derivatives such as (S)-2-methylbutyryl-CoA as well as short straight chain acyl-CoAs such as butyryl-CoA. Plays an important role in the metabolism of L-isoleucine by catalyzing the dehydrogenation of 2-methylbutyryl-CoA, one of the steps of the L-isoleucine catabolic pathway. Can also act on valproyl-CoA, a metabolite of valproic acid, an antiepileptic drug. This chain is Short/branched chain specific acyl-CoA dehydrogenase, mitochondrial, found in Homo sapiens (Human).